Reading from the N-terminus, the 370-residue chain is MSNKDIRVVVGMSGGVDSSVTAHVLKDQGYDVIGIFMKNWDDTDENGVCTATEDYNDVIAVCNQIGIPYYAVNFEQEYWDKVFTYFLDEYKKGRTPNPDVMCNKEIKFKAFLEHALKLGADYVATGHYARIRRHDDGHVEMLRGVDNNKDQTYFLNQLSQQQLSKVMFPIGDIDKKEVRKIAEEQDLATAKKKDSTGICFIGERNFKTFLSQYLPAQSGEMRTLNGDKMGMHSGLMYYTIGQRHGLGIGGDGDPWFVVGKNLEDNILYVEQGFHHDALYSDYLIASDFSFVNPVDLDNGFECTAKFRYRQKDTKVFVQRESQNALRVTFDEPVRAITPGQAVVFYDEEVCLGGATIDDVFKTTGQLSYVV.

Residues 11 to 18 (GMSGGVDS) and Met37 contribute to the ATP site. The tract at residues 97-99 (NPD) is interaction with target base in tRNA. Residue Cys102 is the Nucleophile of the active site. Cys102 and Cys199 are joined by a disulfide. Gly126 serves as a coordination point for ATP. The interaction with tRNA stretch occupies residues 149–151 (KDQ). Cys199 functions as the Cysteine persulfide intermediate in the catalytic mechanism. The interaction with tRNA stretch occupies residues 307–308 (RY).

It belongs to the MnmA/TRMU family.

The protein resides in the cytoplasm. The enzyme catalyses S-sulfanyl-L-cysteinyl-[protein] + uridine(34) in tRNA + AH2 + ATP = 2-thiouridine(34) in tRNA + L-cysteinyl-[protein] + A + AMP + diphosphate + H(+). Its function is as follows. Catalyzes the 2-thiolation of uridine at the wobble position (U34) of tRNA, leading to the formation of s(2)U34. This is tRNA-specific 2-thiouridylase MnmA from Staphylococcus haemolyticus (strain JCSC1435).